Consider the following 82-residue polypeptide: P2Y purinoceptor 2 (82 aa).

A helical membrane pass occupies residues 1-25; the sequence is LPLSYGVVCVLGLCLNVVALYIFLC. Residues 26–35 are Cytoplasmic-facing; the sequence is RLKTWNASTT. Residues 36–56 form a helical membrane-spanning segment; the sequence is YMFHLAVSDSLYAASLPLLVY. The Extracellular segment spans residues 57 to 75; the sequence is YYAQGDHWPFSTVLCKLVR. A helical membrane pass occupies residues 76–82; the sequence is FLFYTNL.

The protein belongs to the G-protein coupled receptor 1 family. Expressed in brain, heart, stria vascularis and vestibular labyrinth.

Its subcellular location is the cell membrane. Functionally, receptor for ATP and UTP coupled to G-proteins that activate a phosphatidylinositol-calcium second messenger system. Not activated by UDP. In Meriones unguiculatus (Mongolian jird), this protein is P2Y purinoceptor 2 (P2RY2).